The sequence spans 672 residues: Glycine--tRNA ligase beta subunit (672 aa).

The protein belongs to the class-II aminoacyl-tRNA synthetase family. In terms of assembly, tetramer of two alpha and two beta subunits.

It is found in the cytoplasm. It carries out the reaction tRNA(Gly) + glycine + ATP = glycyl-tRNA(Gly) + AMP + diphosphate. In Thermotoga petrophila (strain ATCC BAA-488 / DSM 13995 / JCM 10881 / RKU-1), this protein is Glycine--tRNA ligase beta subunit.